The sequence spans 241 residues: Probable porphobilinogen deaminase (241 aa).

This sequence belongs to the HMBS family.

It carries out the reaction 4 porphobilinogen + H2O = hydroxymethylbilane + 4 NH4(+). Its pathway is porphyrin-containing compound metabolism; protoporphyrin-IX biosynthesis; coproporphyrinogen-III from 5-aminolevulinate: step 2/4. In terms of biological role, tetrapolymerization of the monopyrrole PBG into the hydroxymethylbilane pre-uroporphyrinogen in several discrete steps. In Chlamydia trachomatis serovar D (strain ATCC VR-885 / DSM 19411 / UW-3/Cx), this protein is Probable porphobilinogen deaminase (hemC).